The following is a 249-amino-acid chain: Phosphonates import ATP-binding protein PhnC (249 aa).

One can recognise an ABC transporter domain in the interval 2–246; the sequence is IEFKKVEKVW…KLNESKLEEI (245 aa). 35 to 42 provides a ligand contact to ATP; the sequence is GLSGAGKT.

The protein belongs to the ABC transporter superfamily. Phosphonates importer (TC 3.A.1.9.1) family. In terms of assembly, the complex is composed of two ATP-binding proteins (PhnC), two transmembrane proteins (PhnE) and a solute-binding protein (PhnD).

The protein resides in the cell membrane. It carries out the reaction phosphonate(out) + ATP + H2O = phosphonate(in) + ADP + phosphate + H(+). In terms of biological role, part of the ABC transporter complex PhnCDE involved in phosphonates import. Responsible for energy coupling to the transport system. The protein is Phosphonates import ATP-binding protein PhnC of Mesoplasma florum (strain ATCC 33453 / NBRC 100688 / NCTC 11704 / L1) (Acholeplasma florum).